The primary structure comprises 182 residues: Isopentenyl-diphosphate Delta-isomerase (182 aa).

H25 and H32 together coordinate Mn(2+). In terms of domain architecture, Nudix hydrolase spans 30–164 (LLHLAFSSWL…PWAFSPWMVM (135 aa)). Residue C67 is part of the active site. C67 contributes to the Mg(2+) binding site. Mn(2+) is bound at residue H69. A Mg(2+)-binding site is contributed by E87. Mn(2+) is bound by residues E114 and E116. The active site involves E116.

The protein belongs to the IPP isomerase type 1 family. As to quaternary structure, homodimer. The cofactor is Mg(2+). Requires Mn(2+) as cofactor.

It localises to the cytoplasm. It catalyses the reaction isopentenyl diphosphate = dimethylallyl diphosphate. The protein operates within isoprenoid biosynthesis; dimethylallyl diphosphate biosynthesis; dimethylallyl diphosphate from isopentenyl diphosphate: step 1/1. Functionally, catalyzes the 1,3-allylic rearrangement of the homoallylic substrate isopentenyl (IPP) to its highly electrophilic allylic isomer, dimethylallyl diphosphate (DMAPP). In Shigella boydii serotype 4 (strain Sb227), this protein is Isopentenyl-diphosphate Delta-isomerase.